A 1007-amino-acid polypeptide reads, in one-letter code: Serine/threonine-protein kinase atg1 (1007 aa).

The Protein kinase domain occupies 30–336 (YTRLSEIGRG…FDVYFAHKVL (307 aa)). ATP contacts are provided by residues 36–44 (IGRGSFAVV) and lysine 59. Aspartate 174 (proton acceptor) is an active-site residue. Disordered regions lie at residues 343-489 (LVAD…KEHA), 524-586 (GGQA…PTSA), 795-817 (RLPS…GSGT), and 878-900 (SRPG…DGGQ). Residues 373-387 (MKRENALSGGVRDEP) show a composition bias toward basic and acidic residues. Residues 396–410 (AMTQSPRPETPSTPM) show a composition bias toward polar residues. The segment covering 477 to 489 (KPVEKAKDEKEHA) has biased composition (basic and acidic residues). Residues 534 to 555 (SGAAPGTPPAGGSSPHASPSKA) show a composition bias toward low complexity. Basic and acidic residues predominate over residues 563-579 (SRADSAHVRQNSYDRRY). Residues 805–817 (SNLSVGSSLGSGT) are compositionally biased toward low complexity. Residues 887–896 (DRADARRDNE) are compositionally biased toward basic and acidic residues.

The protein belongs to the protein kinase superfamily. Ser/Thr protein kinase family. APG1/unc-51/ULK1 subfamily. As to quaternary structure, homodimer. Forms a ternary complex with ATG13 and ATG17.

The protein localises to the cytoplasm. It localises to the preautophagosomal structure membrane. The catalysed reaction is L-seryl-[protein] + ATP = O-phospho-L-seryl-[protein] + ADP + H(+). It carries out the reaction L-threonyl-[protein] + ATP = O-phospho-L-threonyl-[protein] + ADP + H(+). Functionally, serine/threonine protein kinase involved in the cytoplasm to vacuole transport (Cvt) and found to be essential in autophagy, where it is required for the formation of autophagosomes. Involved in the clearance of protein aggregates which cannot be efficiently cleared by the proteasome. Required for selective autophagic degradation of the nucleus (nucleophagy) as well as for mitophagy which contributes to regulate mitochondrial quantity and quality by eliminating the mitochondria to a basal level to fulfill cellular energy requirements and preventing excess ROS production. Also involved in endoplasmic reticulum-specific autophagic process, in selective removal of ER-associated degradation (ERAD) substrates. Plays a key role in ATG9 and ATG23 cycling through the pre-autophagosomal structure and is necessary to promote ATG18 binding to ATG9 through phosphorylation of ATG9. Catalyzes phosphorylation of ATG4, decreasing the interaction between ATG4 and ATG8 and impairing deconjugation of PE-conjugated forms of ATG8. The sequence is that of Serine/threonine-protein kinase atg1 from Aspergillus niger (strain ATCC MYA-4892 / CBS 513.88 / FGSC A1513).